The following is a 94-amino-acid chain: Co-chaperonin GroES (94 aa).

The protein belongs to the GroES chaperonin family. Heptamer of 7 subunits arranged in a ring. Interacts with the chaperonin GroEL.

It is found in the cytoplasm. Its function is as follows. Together with the chaperonin GroEL, plays an essential role in assisting protein folding. The GroEL-GroES system forms a nano-cage that allows encapsulation of the non-native substrate proteins and provides a physical environment optimized to promote and accelerate protein folding. GroES binds to the apical surface of the GroEL ring, thereby capping the opening of the GroEL channel. This is Co-chaperonin GroES from Exiguobacterium sp. (strain ATCC BAA-1283 / AT1b).